The primary structure comprises 387 residues: Succinyl-diaminopimelate desuccinylase (387 aa).

Residue H74 coordinates Zn(2+). D76 is an active-site residue. Zn(2+) is bound at residue D107. E142 functions as the Proton acceptor in the catalytic mechanism. Positions 143, 171, and 360 each coordinate Zn(2+).

This sequence belongs to the peptidase M20A family. DapE subfamily. As to quaternary structure, homodimer. Zn(2+) is required as a cofactor. Requires Co(2+) as cofactor.

It catalyses the reaction N-succinyl-(2S,6S)-2,6-diaminopimelate + H2O = (2S,6S)-2,6-diaminopimelate + succinate. It functions in the pathway amino-acid biosynthesis; L-lysine biosynthesis via DAP pathway; LL-2,6-diaminopimelate from (S)-tetrahydrodipicolinate (succinylase route): step 3/3. Catalyzes the hydrolysis of N-succinyl-L,L-diaminopimelic acid (SDAP), forming succinate and LL-2,6-diaminopimelate (DAP), an intermediate involved in the bacterial biosynthesis of lysine and meso-diaminopimelic acid, an essential component of bacterial cell walls. The polypeptide is Succinyl-diaminopimelate desuccinylase (Rhodopseudomonas palustris (strain TIE-1)).